Here is a 151-residue protein sequence, read N- to C-terminus: UPF0561 protein C2orf68 homolog (151 aa).

The tract at residues 1 to 89 (MEEEGEAQGR…TLKDEPNDNG (89 aa)) is disordered. Composition is skewed to basic and acidic residues over residues 32 to 46 (LARD…QAKE) and 70 to 85 (RQRE…KDEP).

Belongs to the UPF0561 family.

This is UPF0561 protein C2orf68 homolog from Xenopus laevis (African clawed frog).